The following is a 421-amino-acid chain: MAESWLRLCGAGPGEEAGPEGGMEEPDALDDSLTSLQWLQEFSILNAKAPTLPPGGTDPHGYHQVPGLVAPGSPLAADPACLGQPHTPGKPTSSCTSRSAPPGLQAPPPDDVDYATNPHVKPPYSYATLICMAMQASKATKITLSAIYKWITDNFCYFRHADPTWQNSIRHNLSLNKCFIKVPREKDEPGKGGFWRIDPQYAERLLSGAFKKRRLPPVHIHPAFARQASQEPSAAPWGGPLTVNREAQQLLQEFEEATGEGGWGTGEGRLGHKRKQPLPKRVAKVLRPPSTLLLTQEEQGELEPLKGNFDWEAIFEAGALGEELSSLEGLELSPPLSPSSHGDVDLTVHGRHINCPATWGPPAEQAADSLDFDETFLATSFLQHPWDESGSGCLPPEPIFEAGDATLAADLQDWASVGAFL.

Disordered regions lie at residues 1 to 32 and 77 to 110; these read MAES…LDDS and ADPA…PPPD. Residues 11–21 show a composition bias toward gly residues; that stretch reads AGPGEEAGPEG. Over residues 90–99 the composition is skewed to polar residues; that stretch reads KPTSSCTSRS. Positions 120–210 form a DNA-binding region, fork-head; sequence VKPPYSYATL…YAERLLSGAF (91 aa).

The protein belongs to the FOXJ1 family. Predominantly expressed in tissues containing motile cilia.

The protein localises to the nucleus. Its function is as follows. Transcription factor specifically required for the formation of motile cilia. Acts by activating transcription of genes that mediate assembly of motile cilia, such as CFAP157. Binds the DNA consensus sequences 5'-HWDTGTTTGTTTA-3' or 5'-KTTTGTTGTTKTW-3' (where H is not G, W is A or T, D is not C, and K is G or T). Activates the transcription of a variety of ciliary proteins in the developing brain and lung. In Mus musculus (Mouse), this protein is Forkhead box protein J1.